The chain runs to 674 residues: Tripartite terminase subunit 3 (674 aa).

A Walker A motif motif is present at residues Val212–Thr219. A Walker B motif motif is present at residues Leu305–Glu310. The active-site For ATPase activity is Glu310. Catalysis depends on for nuclease activity residues Asp463 and Glu534. Positions Gly580 to Lys600 are required for interaction with UL56 and DNA packaging. Asp651 functions as the For nuclease activity in the catalytic mechanism.

This sequence belongs to the herpesviridae TRM3 protein family. As to quaternary structure, interacts with the terminase subunits TRM1 and TRM2. Interacts with portal protein.

The protein resides in the host nucleus. Its function is as follows. Component of the molecular motor that translocates viral genomic DNA in empty capsid during DNA packaging. Forms a tripartite terminase complex together with TRM1 and TRM2 in the host cytoplasm. Once the complex reaches the host nucleus, it interacts with the capsid portal vertex. This portal forms a ring in which genomic DNA is translocated into the capsid. TRM3 carries an RNase H-like nuclease activity that plays an important role for the cleavage of concatemeric viral DNA into unit length genomes. This Homo sapiens (Human) protein is Tripartite terminase subunit 3.